We begin with the raw amino-acid sequence, 145 residues long: Probable inactive ribonuclease-like protein 12 (145 aa).

The first 19 residues, methionine 1 to threonine 19, serve as a signal peptide directing secretion. A glycan (N-linked (GlcNAc...) asparagine) is linked at asparagine 88.

The protein belongs to the pancreatic ribonuclease family.

The protein resides in the secreted. Its function is as follows. Does not exhibit any ribonuclease activity. The protein is Probable inactive ribonuclease-like protein 12 (Rnase12) of Rattus norvegicus (Rat).